The chain runs to 325 residues: CRISPR-associated endonuclease Cas1 3 (325 aa).

The Mn(2+) site is built by Glu-152, His-217, and Glu-232.

It belongs to the CRISPR-associated endonuclease Cas1 family. Homodimer, forms a heterotetramer with a Cas2 homodimer. Mg(2+) is required as a cofactor. The cofactor is Mn(2+).

Its function is as follows. CRISPR (clustered regularly interspaced short palindromic repeat), is an adaptive immune system that provides protection against mobile genetic elements (viruses, transposable elements and conjugative plasmids). CRISPR clusters contain spacers, sequences complementary to antecedent mobile elements, and target invading nucleic acids. CRISPR clusters are transcribed and processed into CRISPR RNA (crRNA). Acts as a dsDNA endonuclease. Involved in the integration of spacer DNA into the CRISPR cassette. The protein is CRISPR-associated endonuclease Cas1 3 of Thermodesulfovibrio yellowstonii (strain ATCC 51303 / DSM 11347 / YP87).